Here is a 908-residue protein sequence, read N- to C-terminus: Serine/threonine-protein kinase WARTS homolog (908 aa).

The stretch at 42-70 (EIRVGRHRAKLDEIRESLKAYEHEAGLLS) forms a coiled coil. 2 stretches are compositionally biased toward low complexity: residues 115 to 125 (VSSAAVSNSNS) and 168 to 181 (PSTTISSTPSTTTE). Disordered stretches follow at residues 115–134 (VSSAAVSNSNSFRTEGGGHK), 162–183 (MIRNGNPSTTISSTPSTTTEES), 203–225 (NNNAPQYSPGYSRPPPPAYDSSP), and 388–412 (KSRAQPPPPQYNQPSEPPPKRVSSP). The segment covering 392–404 (QPPPPQYNQPSEP) has biased composition (pro residues). Residues 439–470 (YMEQHVERLLQQYKEREKRMKQLEKEMVSAQL) adopt a coiled-coil conformation. Residues 502–807 (FTVISHIGVG…TAQVKNHPWF (306 aa)) enclose the Protein kinase domain. ATP is bound by residues 508–516 (IGVGAFGKV) and Lys531. Asp625 serves as the catalytic Proton acceptor. Residues 808–874 (RGIDWVNLRK…RHFFDTDSVG (67 aa)) form the AGC-kinase C-terminal domain.

This sequence belongs to the protein kinase superfamily. AGC Ser/Thr protein kinase family. Interacts (via N-terminus) with yap-1 (via WW domain). Requires Mg(2+) as cofactor. Expressed in muscles and epithelial tissues including pharynx, intestine and hypodermis. Expressed in vulval and spermathecal seam cells.

Its subcellular location is the cytoplasm. The protein resides in the apical cell membrane. It carries out the reaction L-seryl-[protein] + ATP = O-phospho-L-seryl-[protein] + ADP + H(+). The enzyme catalyses L-threonyl-[protein] + ATP = O-phospho-L-threonyl-[protein] + ADP + H(+). In terms of biological role, phosphorylates yap-1 which may negatively regulate yap-1 nuclear localization. Plays an essential role in larval development. Regulates growth, the formation of gut granules, lifespan and cell and body sizes probably in synergy with the TGF-beta sma/mab pathway. Does not appear to regulate apoptosis and proliferation. In addition, may synergize with the TGF-beta daf-7 dauer pathway to regulate entry into the dauer stage. Maintains the cellular integrity of intestinal cells by regulating the localization of apical actin and junctional proteins. The protein is Serine/threonine-protein kinase WARTS homolog of Caenorhabditis elegans.